We begin with the raw amino-acid sequence, 83 residues long: uncharacterized protein (83 aa).

The tract at residues 40-65 (RMQAGASPDEDNDVNGETSFSRSFGG) is disordered. The segment covering 54-65 (NGETSFSRSFGG) has biased composition (polar residues).

This is an uncharacterized protein from Dictyostelium discoideum (Social amoeba).